We begin with the raw amino-acid sequence, 358 residues long: Neutral protease 2 homolog MGYG_02351 (358 aa).

An N-terminal signal peptide occupies residues 1–17 (MQFVALLAALGAPLALA). Residues 18-183 (ASIPAAHNNS…DSPAGVIDKR (166 aa)) constitute a propeptide that is removed on maturation. Intrachain disulfides connect C191–C260 and C267–C285. H309 contributes to the Zn(2+) binding site. Residue E310 is part of the active site. H313 and D324 together coordinate Zn(2+).

It belongs to the peptidase M35 family. Zn(2+) is required as a cofactor.

It is found in the secreted. It catalyses the reaction Preferential cleavage of bonds with hydrophobic residues in P1'. Also 3-Asn-|-Gln-4 and 8-Gly-|-Ser-9 bonds in insulin B chain.. In terms of biological role, secreted metalloproteinase that allows assimilation of proteinaceous substrates. Shows high activities on basic nuclear substrates such as histone and protamine. May be involved in virulence. In Arthroderma gypseum (strain ATCC MYA-4604 / CBS 118893) (Microsporum gypseum), this protein is Neutral protease 2 homolog MGYG_02351.